Consider the following 1379-residue polypeptide: Partitioning defective protein 3 (1379 aa).

The span at 1 to 23 (MSASSTSSSSTSCPEGGEPSGSC) shows a compositional bias: low complexity. Disordered regions lie at residues 1 to 32 (MSAS…GEST) and 208 to 335 (YNVG…SDRK). Composition is skewed to polar residues over residues 239–256 (SFDQ…PKPS) and 272–284 (ILRS…ASGS). Basic and acidic residues-rich tracts occupy residues 302–315 (EVEK…ERKS) and 322–335 (DKNP…SDRK). PDZ domains are found at residues 381–483 (LVTF…IINR) and 515–599 (VVEL…SRVS). A coiled-coil region spans residues 606-626 (TSASSENKENEETLKVVEEEK). The 92-residue stretch at 659 to 750 (VIPFINGSSS…EVGMISSNVR (92 aa)) folds into the PDZ 3 domain. Disordered regions lie at residues 767–873 (DLSR…MGAA), 887–918 (HQRQ…RSPM), 949–1085 (QSME…GGNV), 1273–1301 (VEPV…SGSS), and 1350–1379 (AYET…FPQY). Composition is skewed to low complexity over residues 776–786 (SSPSPSSRMSS) and 798–826 (ATRG…AVPA). 2 stretches are compositionally biased toward basic and acidic residues: residues 828 to 844 (LTER…RNDE) and 854 to 869 (FNRE…EKRG). Low complexity predominate over residues 894-912 (PTSSTQKRSKSQPRSSSQR). Residues 967 to 977 (QIPTGSSSKVQ) show a composition bias toward polar residues. 2 stretches are compositionally biased toward basic and acidic residues: residues 1030–1040 (KSRDASPEKTP) and 1048–1060 (SVER…DERN). Positions 1290–1301 (STSSGAVASGSS) are enriched in low complexity.

This sequence belongs to the PAR3 family. Required, together with pkc-3, for the localization of par-6; par-6 is involved in localizing/maintaining par-3 at the cell periphery. Interacts with par-6 and pkc-3 for localization at the periphery of anterior cortex of the embryo. In terms of tissue distribution, asymmetrically distributed at the periphery of the zygote and in dividing blastomeres of the germline lineage. Coexpressed with par-6; patchy expression observed at the periphery after completion of meiosis I and in meiosis II. On completion of metaphase II, expression is restricted to the anterior 85% of embryo length; this decreases to 55% in embryos between prophase and telophase of the first mitosis. During the first cleavage, expression is detected in the advancing furrow. Transiently coexpressed and colocalized asymmetrically with par-6 and pkc-3, in the developing somatic gonad, including the spermathecal precursor cells of L4 larvae.

It is found in the cytoplasm. Functionally, in cooperation with pkc-3, required for establishing cell polarity and regulating spindle orientation in the early embryo. Localization is crucial for recruiting par-6 and pkc-3 to the peripheral apical cortex and restricting par-2 to basolateral surfaces. Necessary for apicobasal and anterior-posterior asymmetries associated with cell adhesion and gastrulation during the first few cycles of embryogenesis, and also for epithelial cell polarity in the distal spermatheca. Regulates the asymmetric localization of csnk-1, ppk-1 and gpr-1/2 during the first embryonic division. This chain is Partitioning defective protein 3, found in Caenorhabditis elegans.